Consider the following 237-residue polypeptide: 2',3'-cyclic-nucleotide 3'-phosphodiesterase (237 aa).

Catalysis depends on histidine 21, which acts as the Proton donor/acceptor. Threonine 23 serves as a coordination point for substrate. The tract at residues 117-137 (HLYTTDSHGNTVKKKSKQSQD) is disordered. Histidine 167 (proton donor/acceptor) is an active-site residue. Serine 169 and tyrosine 172 together coordinate substrate.

The protein belongs to the 2H phosphoesterase superfamily. CPD1 family.

It localises to the golgi apparatus. The enzyme catalyses a nucleoside 2',3'-cyclic phosphate + H2O = a nucleoside 2'-phosphate + H(+). Its function is as follows. Involved in the metabolism of ADP-ribose 1',2'-cyclic phosphate which is produced as a consequence of tRNA splicing. This chain is 2',3'-cyclic-nucleotide 3'-phosphodiesterase (CPD1), found in Debaryomyces hansenii (strain ATCC 36239 / CBS 767 / BCRC 21394 / JCM 1990 / NBRC 0083 / IGC 2968) (Yeast).